Here is a 392-residue protein sequence, read N- to C-terminus: GPI alpha-1,4-mannosyltransferase I, catalytic subunit (392 aa).

Residues 1-4 are Cytoplasmic-facing; it reads MEAR. The chain crosses the membrane as a helical span at residues 5–25; sequence VCVLFGAAALLRLLLLCVGVY. Over 26–65 the chain is Lumenal; sequence QDQTLKLKYTDVDYHVFTDAARFITQGESPYRRSTFRYTP. Residues 66 to 86 form a helical membrane-spanning segment; the sequence is LLALLLVPNVYLSLLFGKLLF. Residues 87 to 125 are Cytoplasmic-facing; the sequence is GFCDLLSGLLMFRLLVLRGASHGSACVSCGLWLLNPLPM. Residues 126-148 form a helical membrane-spanning segment; sequence AVSTRGNAESVLAVLVLSTLLCL. The Lumenal portion of the chain corresponds to 149–156; sequence QLRKHTTA. The helical transmembrane segment at 157-177 threads the bilayer; that stretch reads ALLFGLSVHMKIYPVTYALPI. Residues 178–198 lie on the Cytoplasmic side of the membrane; that stretch reads ALALTAAPARGRGVLLRFFSP. Residues 199–219 traverse the membrane as a helical segment; sequence ALLRFAAVSAAVFLSLGLIFY. At 220 to 261 the chain is on the lumenal side; that stretch reads CRYGWEFLQEAYLYHLTRRDLRHNFSPFFYLQYVCAERCWSS. A helical membrane pass occupies residues 262–282; that stretch reads GLLPLLLLPQLLLLLLASAAF. The Cytoplasmic segment spans residues 283–302; it reads SSDLPFCCFLHTAVFVSFNR. Residues 303 to 323 form a helical membrane-spanning segment; the sequence is VCTSQYFLWYLCLLPVVLPRL. Topologically, residues 324–330 are lumenal; that stretch reads RLRLGRG. A helical transmembrane segment spans residues 331–351; that stretch reads LLLLLLWLLLQGLWLAPAYLL. At 352–360 the chain is on the cytoplasmic side; it reads EFQGWNSFS. A helical membrane pass occupies residues 361 to 381; that stretch reads WIWAASLLFLLTNTFILAQII. Over 382-392 the chain is Lumenal; sequence QHYRPHDRKAD.

This sequence belongs to the PIGM family. As to quaternary structure, part of the glycosylphosphatidylinositol-mannosyltransferase I complex that is composed of PIGM and PIGX.

Its subcellular location is the endoplasmic reticulum membrane. It functions in the pathway glycolipid biosynthesis; glycosylphosphatidylinositol-anchor biosynthesis. Its function is as follows. Catalytic subunit of the glycosylphosphatidylinositol-mannosyltransferase I complex which catalyzes the transfer of the first mannose, via an alpha-1,4 bond from a dolichol-phosphate-mannose (Dol-P-Man) to the glucosaminyl acyl phosphatidylinositol (GlcN-(acyl)PI) intermediate to generate alpha-D-Man-(1-&gt;4)-alpha-D-GlcN-(1-&gt;6)-(1-radyl,2-acyl-sn-glycero-3-phospho)-2-acyl-inositol and participates in the sixth step of the glycosylphosphatidylinositol-anchor biosynthesis. This Danio rerio (Zebrafish) protein is GPI alpha-1,4-mannosyltransferase I, catalytic subunit.